The chain runs to 762 residues: 5-methyltetrahydropteroyltriglutamate--homocysteine methyltransferase (762 aa).

Residues 17–20 (REWK) and Lys111 each bind 5-methyltetrahydropteroyltri-L-glutamate. L-homocysteine-binding positions include 435-437 (IGS) and Glu488. Residues 435-437 (IGS) and Glu488 each bind L-methionine. 5-methyltetrahydropteroyltri-L-glutamate-binding positions include 519–520 (RC) and Trp565. L-homocysteine is bound at residue Asp603. Residue Asp603 participates in L-methionine binding. Glu609 serves as a coordination point for 5-methyltetrahydropteroyltri-L-glutamate. Zn(2+) is bound by residues His645, Cys647, and Glu669. His698 acts as the Proton donor in catalysis. Cys730 provides a ligand contact to Zn(2+).

This sequence belongs to the vitamin-B12 independent methionine synthase family. It depends on Zn(2+) as a cofactor.

It carries out the reaction 5-methyltetrahydropteroyltri-L-glutamate + L-homocysteine = tetrahydropteroyltri-L-glutamate + L-methionine. The protein operates within amino-acid biosynthesis; L-methionine biosynthesis via de novo pathway; L-methionine from L-homocysteine (MetE route): step 1/1. Its function is as follows. Catalyzes the transfer of a methyl group from 5-methyltetrahydrofolate to homocysteine resulting in methionine formation. The sequence is that of 5-methyltetrahydropteroyltriglutamate--homocysteine methyltransferase from Bacillus cereus (strain ATCC 14579 / DSM 31 / CCUG 7414 / JCM 2152 / NBRC 15305 / NCIMB 9373 / NCTC 2599 / NRRL B-3711).